Here is a 161-residue protein sequence, read N- to C-terminus: PTS system glucose-specific EIIA component (161 aa).

The region spanning Asp31–Asn135 is the PTS EIIA type-1 domain. Zn(2+)-binding residues include His68 and His83. Residue His83 is the Tele-phosphohistidine intermediate; for EIIA activity of the active site. At His83 the chain carries Phosphohistidine; by HPr.

Zn(2+) serves as cofactor.

It localises to the cytoplasm. Its function is as follows. The phosphoenolpyruvate-dependent sugar phosphotransferase system (sugar PTS), a major carbohydrate active transport system, catalyzes the phosphorylation of incoming sugar substrates concomitantly with their translocation across the cell membrane. The enzyme II complex composed of PtsG and Crr is involved in glucose transport. This is PTS system glucose-specific EIIA component (crr) from Buchnera aphidicola subsp. Acyrthosiphon pisum (strain APS) (Acyrthosiphon pisum symbiotic bacterium).